Consider the following 578-residue polypeptide: Solute carrier family 15 member 3 (578 aa).

The span at 1–15 (MSAPRAEEQPSRSGE) shows a compositional bias: basic and acidic residues. The tract at residues 1–27 (MSAPRAEEQPSRSGERQPLVARGPRGP) is disordered. The next 5 membrane-spanning stretches (helical) occupy residues 33 to 53 (TAAA…FGVT), 77 to 97 (LLFL…ADVY), 102 to 122 (LTIS…LTTI), 155 to 175 (PYCA…ASSV), and 201 to 221 (WFYW…AFIE). An N-linked (GlcNAc...) asparagine glycan is attached at N223. Residues 232 to 252 (IIVGLVGLAFFIFLFATPVFI) traverse the membrane as a helical segment. Positions 280–301 (SRDSESAHLLPDQRSNQPGPSP) are disordered. Residues 308–328 (FQVLVKILPVMVTLVPYWMVY) form a helical membrane-spanning segment. N353 is a glycosylation site (N-linked (GlcNAc...) asparagine). 2 helical membrane passes run 367-387 (IPEA…IPVK) and 405-425 (LQKM…AGVL). N436 carries N-linked (GlcNAc...) asparagine glycosylation. Transmembrane regions (helical) follow at residues 462-481 (YLLI…EFAY), 494-514 (GIFF…VALL), and 538-558 (YFFL…WIAG).

It belongs to the major facilitator superfamily. Proton-dependent oligopeptide transporter (POT/PTR) (TC 2.A.17) family. As to expression, expressed highly in bone marrow derived macrophages, and weakly in spleen and lung. Expressed in plasmacytoid dendritic cells (pDCs) in response to toll-like receptors (TLR) stimulation.

Its subcellular location is the lysosome membrane. It is found in the endosome membrane. It catalyses the reaction N-acetyl-D-muramoyl-L-alanyl-D-isoglutamine(out) + n H(+)(out) = N-acetyl-D-muramoyl-L-alanyl-D-isoglutamine(in) + n H(+)(in). The enzyme catalyses glycylglycylglycine(out) + n H(+)(out) = glycylglycylglycine(in) + n H(+)(in). It carries out the reaction carnosine(out) + n H(+)(out) = carnosine(in) + n H(+)(in). The catalysed reaction is L-histidine(out) + n H(+)(out) = L-histidine(in) + n H(+)(in). Its function is as follows. Proton-coupled amino-acid transporter that transports free histidine and certain di- and tripeptides, and is involved in innate immune response. Also able to transport carnosine. Involved in the detection of microbial pathogens by toll-like receptors (TLRs) and NOD-like receptors (NLRs), probably by mediating transport of bacterial peptidoglycans across the endolysosomal membrane: catalyzes the transport of certain bacterial peptidoglycans, such as muramyl dipeptide (MDP), the NOD2 ligand. This is Solute carrier family 15 member 3 from Mus musculus (Mouse).